We begin with the raw amino-acid sequence, 84 residues long: Small ribosomal subunit protein uS17 (84 aa).

It belongs to the universal ribosomal protein uS17 family. Part of the 30S ribosomal subunit.

Functionally, one of the primary rRNA binding proteins, it binds specifically to the 5'-end of 16S ribosomal RNA. This is Small ribosomal subunit protein uS17 from Erwinia tasmaniensis (strain DSM 17950 / CFBP 7177 / CIP 109463 / NCPPB 4357 / Et1/99).